Consider the following 464-residue polypeptide: Cytoplasmic tRNA 2-thiolation protein 2 (464 aa).

It belongs to the CTU2/NCS2 family.

It is found in the cytoplasm. The protein operates within tRNA modification; 5-methoxycarbonylmethyl-2-thiouridine-tRNA biosynthesis. Plays a central role in 2-thiolation of mcm(5)S(2)U at tRNA wobble positions of tRNA(Lys), tRNA(Glu) and tRNA(Gln). May act by forming a heterodimer with NCS6/CTU1 that ligates sulfur from thiocarboxylated URM1 onto the uridine of tRNAs at wobble position. In Oryza sativa subsp. japonica (Rice), this protein is Cytoplasmic tRNA 2-thiolation protein 2.